The primary structure comprises 438 residues: Protein maelstrom 2 (438 aa).

The segment at residues Ala-2 to Leu-69 is a DNA-binding region (HMG box). The tract at residues Lys-374–Arg-438 is disordered. Residues Leu-381–Ser-391 are compositionally biased toward polar residues.

This sequence belongs to the maelstrom family.

The protein resides in the cytoplasm. Its subcellular location is the nucleus. Involved both in the piRNA and miRNA metabolic processes. As a component of the meiotic nuage, plays a central role during oogenesis by repressing transposable elements and preventing their mobilization, which is essential for the germline integrity. Repression of transposable elements is mediated via the piRNA metabolic process, which mediates the repression of transposable elements during meiosis by forming complexes composed of piRNAs and Piwi proteins and governs the repression of transposons. As a nuclear component, it is required for proper differentiation in the germline stem cell (GSC) lineage by repressing microRNA-7 (miR-7), thereby acting as an indirect regulator of bag-of-marbles (Bam). Acts by binding to the promoter of miR-7 gene and repressing its expression; miR-7 repression alleviates the Bam repression by miR-7, thereby allowing differentiation in the germline stem cell (GSC) lineage. The sequence is that of Protein maelstrom 2 (mael2) from Drosophila persimilis (Fruit fly).